A 58-amino-acid chain; its full sequence is MSSVIVKENETLDSALRRFKRNCAKAGIQQEIRKREHYEKPSVKRKKKSEAARKRKYN.

Residues 31-42 show a composition bias toward basic and acidic residues; sequence EIRKREHYEKPS. Residues 31 to 58 are disordered; sequence EIRKREHYEKPSVKRKKKSEAARKRKYN. Residues 43 to 58 show a composition bias toward basic residues; that stretch reads VKRKKKSEAARKRKYN.

The protein belongs to the bacterial ribosomal protein bS21 family.

The chain is Small ribosomal subunit protein bS21 from Agathobacter rectalis (strain ATCC 33656 / DSM 3377 / JCM 17463 / KCTC 5835 / VPI 0990) (Eubacterium rectale).